Reading from the N-terminus, the 226-residue chain is Leucyl/phenylalanyl-tRNA--protein transferase (226 aa).

This sequence belongs to the L/F-transferase family.

It localises to the cytoplasm. The enzyme catalyses N-terminal L-lysyl-[protein] + L-leucyl-tRNA(Leu) = N-terminal L-leucyl-L-lysyl-[protein] + tRNA(Leu) + H(+). It catalyses the reaction N-terminal L-arginyl-[protein] + L-leucyl-tRNA(Leu) = N-terminal L-leucyl-L-arginyl-[protein] + tRNA(Leu) + H(+). It carries out the reaction L-phenylalanyl-tRNA(Phe) + an N-terminal L-alpha-aminoacyl-[protein] = an N-terminal L-phenylalanyl-L-alpha-aminoacyl-[protein] + tRNA(Phe). Its function is as follows. Functions in the N-end rule pathway of protein degradation where it conjugates Leu, Phe and, less efficiently, Met from aminoacyl-tRNAs to the N-termini of proteins containing an N-terminal arginine or lysine. This is Leucyl/phenylalanyl-tRNA--protein transferase from Pseudomonas aeruginosa (strain LESB58).